The following is a 262-amino-acid chain: MSPSLSGRTPRPKKRLGQHFLKDANTARIVAAGLTERDVVLEIGPGRGFLTAFLAERAGLVHAVEIDPDVLPELRRAVGARGNVRIHEADALRFDYGALSPPPNRLAANLPYNIASPLVLRLLEEVPSLERMRFMVQLEVALRMTARPGSKDYGAYAVLIQLLSRPEVAHRVSPRVFDPPPRVRSAVVELERRRDAPEDYRGVKELVAAAFRSRRKRLPNNLPGPLRERAEEALAGLGHGPDARAEELSPEDFVALYRRISP.

His-19, Leu-21, Gly-44, Glu-65, Asp-90, and Asn-109 together coordinate S-adenosyl-L-methionine. Positions 218–246 (LPNNLPGPLRERAEEALAGLGHGPDARAE) are disordered.

It belongs to the class I-like SAM-binding methyltransferase superfamily. rRNA adenine N(6)-methyltransferase family. RsmA subfamily.

Its subcellular location is the cytoplasm. It carries out the reaction adenosine(1518)/adenosine(1519) in 16S rRNA + 4 S-adenosyl-L-methionine = N(6)-dimethyladenosine(1518)/N(6)-dimethyladenosine(1519) in 16S rRNA + 4 S-adenosyl-L-homocysteine + 4 H(+). Its function is as follows. Specifically dimethylates two adjacent adenosines (A1518 and A1519) in the loop of a conserved hairpin near the 3'-end of 16S rRNA in the 30S particle. May play a critical role in biogenesis of 30S subunits. This Rubrobacter xylanophilus (strain DSM 9941 / JCM 11954 / NBRC 16129 / PRD-1) protein is Ribosomal RNA small subunit methyltransferase A.